The sequence spans 551 residues: Fusion glycoprotein F0 (551 aa).

The signal sequence occupies residues 1–23; it reads MHHLHPMIVCIFVMYTGIVGSDA. The Extracellular segment spans residues 24-492; that stretch reads IAGDQLLNIG…TAKTLYSLSA (469 aa). N-linked (GlcNAc...) asparagine; by host glycosylation is found at N65, N69, N77, and N90. Cystine bridges form between C68-C189, C328-C337, C352-C360, C384-C389, and C391-C414. The tract at residues 107–131 is fusion peptide; it reads FAGVVVGLAALGVATAAQITAAVAI. Positions 132 to 160 form a coiled coil; sequence VKANANAAAINNLASSIQSTNKAVSDVID. Residues N431 and N461 are each glycosylated (N-linked (GlcNAc...) asparagine; by host). Residues 456-481 adopt a coiled-coil conformation; sequence QINSINKSLKSAEDWIADSNFFANQA. The chain crosses the membrane as a helical span at residues 493–513; it reads IALILSVITLVVVGLLIAYII. Residues 514–551 lie on the Cytoplasmic side of the membrane; that stretch reads KLVSQIHQFRSLAATTMFHRENPAFFSKNNHGNIYGIS.

The protein belongs to the paramyxoviruses fusion glycoprotein family. Homotrimer of disulfide-linked F1-F2. Post-translationally, the inactive precursor F0 is glycosylated and proteolytically cleaved into F1 and F2 to be functionally active. The cleavage is mediated by cellular proteases during the transport and maturation of the polypeptide.

Its subcellular location is the virion membrane. The protein localises to the host cell membrane. Functionally, class I viral fusion protein. Under the current model, the protein has at least 3 conformational states: pre-fusion native state, pre-hairpin intermediate state, and post-fusion hairpin state. During viral and plasma cell membrane fusion, the heptad repeat (HR) regions assume a trimer-of-hairpins structure, positioning the fusion peptide in close proximity to the C-terminal region of the ectodomain. The formation of this structure appears to drive apposition and subsequent fusion of viral and plasma cell membranes. Directs fusion of viral and cellular membranes leading to delivery of the nucleocapsid into the cytoplasm. This fusion is pH independent and occurs directly at the outer cell membrane. The trimer of F1-F2 (F protein) probably interacts with HN at the virion surface. Upon HN binding to its cellular receptor, the hydrophobic fusion peptide is unmasked and interacts with the cellular membrane, inducing the fusion between cell and virion membranes. Later in infection, F proteins expressed at the plasma membrane of infected cells could mediate fusion with adjacent cells to form syncytia, a cytopathic effect that could lead to tissue necrosis. This Human parainfluenza 2 virus (strain Greer) (HPIV-2) protein is Fusion glycoprotein F0 (F).